Here is a 261-residue protein sequence, read N- to C-terminus: MTEPDVAGAPASKPEPASTGAASAAQLSGYSRVLLKLGGEMFGGGQVGLDPDVVAQVARQIADVVRGGVQIAVVIGGGNFFRGAQLQQLGMERTRSDYMGMLGTVMNSLALQDFLEKEGIVTRVQTAITMGQVAEPYLPLRAVRHLEKGRVVIFGAGMGLPYFSTDTTAAQRALEIGADVVLMAKAVDGVFAEDPRVNPEAELLTAVSHREVLDRGLRVADATAFSLCMDNGMPILVFNLLTDGNIARAVRGEKIGTLVTT.

The tract at residues Met1–Ser23 is disordered. Residue Lys36–Gly39 coordinates ATP. A UMP-binding site is contributed by Gly77. ATP-binding residues include Gly78 and Arg82. UMP-binding positions include Asp97 and Met158–Thr165. Residues Phe191 and Asp194 each coordinate ATP.

The protein belongs to the UMP kinase family. In terms of assembly, homohexamer.

The protein localises to the cytoplasm. It catalyses the reaction UMP + ATP = UDP + ADP. It participates in pyrimidine metabolism; CTP biosynthesis via de novo pathway; UDP from UMP (UMPK route): step 1/1. Inhibited by UTP. Catalyzes the reversible phosphorylation of UMP to UDP. This Mycobacterium tuberculosis (strain ATCC 25177 / H37Ra) protein is Uridylate kinase.